The chain runs to 465 residues: MLWTDCLTRLRQELSDNVFAMWIRPLVAEEVEGILRLYAPNPYWTRYIQENHLELISILAEQLSEGRVRQVEILVDSRPGSILSSSEQPATTTAALQTAPIPQPAKGKREPEPVANTAVSSKSSKKKLLNPQFTFSLFVEGRSNQMAAETCRKVLTQLGASQHNPLFLYGPTGLGKTHLMQAVGNALLQAKPNARVMYMTSESFVQDFVSSLQKGKVEEFKKNCRSLDLLLVDDIHLLAGKEASLVEFFYTFNALLDESKQIILTSDRYPKELTELDPRLVSRFSWGLSVGVEPPDIETRIEILLKKAENSGVDLPRNCALFIAQQVVANVRELEGALNKVVAISRFKGAPIDLDVVRESLKDVLAIRARTISVENIQRVVSEYFRIPLKELVGPKRTRIYARPRQLAMGLARELTGDSFPEIGMAFGGRDHSTVMHACEKVVSLREEDPIFDEDYKNLLRLLQS.

The tract at residues 1–87 (MLWTDCLTRL…RPGSILSSSE (87 aa)) is domain I, interacts with DnaA modulators. A disordered region spans residues 81 to 123 (SILSSSEQPATTTAALQTAPIPQPAKGKREPEPVANTAVSSKS). A compositionally biased stretch (low complexity) spans 88 to 100 (QPATTTAALQTAP). The domain II stretch occupies residues 88-127 (QPATTTAALQTAPIPQPAKGKREPEPVANTAVSSKSSKKK). Residues 128-345 (LLNPQFTFSL…GALNKVVAIS (218 aa)) form a domain III, AAA+ region region. 4 residues coordinate ATP: Gly173, Gly175, Lys176, and Thr177. The domain IV, binds dsDNA stretch occupies residues 346–465 (RFKGAPIDLD…YKNLLRLLQS (120 aa)).

This sequence belongs to the DnaA family. As to quaternary structure, oligomerizes as a right-handed, spiral filament on DNA at oriC.

The protein resides in the cytoplasm. In terms of biological role, plays an essential role in the initiation and regulation of chromosomal replication. ATP-DnaA binds to the origin of replication (oriC) to initiate formation of the DNA replication initiation complex once per cell cycle. Binds the DnaA box (a 9 base pair repeat at the origin) and separates the double-stranded (ds)DNA. Forms a right-handed helical filament on oriC DNA; dsDNA binds to the exterior of the filament while single-stranded (ss)DNA is stabiized in the filament's interior. The ATP-DnaA-oriC complex binds and stabilizes one strand of the AT-rich DNA unwinding element (DUE), permitting loading of DNA polymerase. After initiation quickly degrades to an ADP-DnaA complex that is not apt for DNA replication. Binds acidic phospholipids. This is Chromosomal replication initiator protein DnaA from Acinetobacter baumannii (strain SDF).